Reading from the N-terminus, the 200-residue chain is 5'(3')-deoxyribonucleotidase, cytosolic type (200 aa).

Asp-12 functions as the Nucleophile in the catalytic mechanism. Positions 12 and 14 each coordinate Mg(2+). Catalysis depends on Asp-14, which acts as the Proton donor. Substrate contacts are provided by Phe-20, Phe-46, Tyr-67, and Thr-101. Position 102 is a phosphothreonine (Thr-102). Lys-136 serves as a coordination point for substrate. Residue Asp-147 coordinates Mg(2+). Ser-184 carries the phosphoserine modification.

The protein belongs to the 5'(3')-deoxyribonucleotidase family. As to quaternary structure, homodimer. Mg(2+) is required as a cofactor.

The protein resides in the cytoplasm. Functionally, dephosphorylates the 5' and 2'(3')-phosphates of deoxyribonucleotides, with a preference for dUMP and dTMP, intermediate activity towards dGMP, and low activity towards dCMP and dAMP. In Mus musculus (Mouse), this protein is 5'(3')-deoxyribonucleotidase, cytosolic type (Nt5c).